Reading from the N-terminus, the 777-residue chain is Cullin-3 (777 aa).

Residues Tyr-568–Pro-596 are disordered. A compositionally biased stretch (low complexity) spans Ser-576–Glu-589. Residues Asp-707–Asp-769 enclose the Cullin neddylation domain. Lys-721 participates in a covalent cross-link: Glycyl lysine isopeptide (Lys-Gly) (interchain with G-Cter in NEDD8).

Belongs to the cullin family. As to quaternary structure, probable component of multiple cullin-RING-based BCB (BTB-CUL3-BTB) E3 ubiquitin-protein ligase complexes formed by cul-3, rbx-1 and a variable BTB domain-containing protein acting as both, adapter to cullin and substrate recognition component. Interacts with bath-15, bath-40, bath-41, bath-42, C17F4.8, tag-303, D2045.8, F57C2.1, ZC239.15 and B0281.5. Interacts with mel-26 (via BTB domain). Interacts with dcn-1. Neddylated. Deneddylated via its interaction with the COP9 signalosome (CSN) complex.

The protein resides in the cytoplasm. Its subcellular location is the nucleus. It participates in protein modification; protein ubiquitination. In terms of biological role, probable core component of multiple cullin-RING-based BCB (BTB-CUL3-BTB) E3 ubiquitin-protein ligase complexes which mediate the ubiquitination and subsequent proteasomal degradation of target proteins. Probably acts as a scaffold protein which may contribute to catalysis through positioning of the substrate and the ubiquitin-conjugating enzyme. Required to target mei-3/katanin for degradation at the meiosis to mitosis transition via its neddylation and deneddylation. Functions in ubiquitin-mediated degradation of CKIs to target cki-1 for degradation. Regulates microtubule stability in the early embryo. In body wall muscles, involved in the organization of myosin thick filaments, likely by regulating the degradation of microtubule severing protein mei-1 downstream of unc-89. Together with spop-1, may promote the ubiquitination and proteasomal degradation of target bromodomain-containing proteins such as bet-1. This chain is Cullin-3, found in Caenorhabditis elegans.